The sequence spans 29 residues: Cytochrome b6-f complex subunit 8 (29 aa).

A helical membrane pass occupies residues 3 to 23; it reads IVDIAWAALMVVFTFSLSLVV.

It belongs to the PetN family. The 4 large subunits of the cytochrome b6-f complex are cytochrome b6, subunit IV (17 kDa polypeptide, PetD), cytochrome f and the Rieske protein, while the 4 small subunits are PetG, PetL, PetM and PetN. The complex functions as a dimer.

It localises to the plastid. The protein resides in the chloroplast thylakoid membrane. Functionally, component of the cytochrome b6-f complex, which mediates electron transfer between photosystem II (PSII) and photosystem I (PSI), cyclic electron flow around PSI, and state transitions. The chain is Cytochrome b6-f complex subunit 8 from Gnetum parvifolium (Small-leaved jointfir).